Reading from the N-terminus, the 282-residue chain is Succinate dehydrogenase [ubiquinone] iron-sulfur subunit, mitochondrial (282 aa).

Residues 1–26 (MAAVVFSLRRSGPVLRLSGALQVSRG) constitute a mitochondrion transit peptide. The region spanning 42 to 135 (KKFAIYRWDP…VSKIYPLPHM (94 aa)) is the 2Fe-2S ferredoxin-type domain. The [2Fe-2S] cluster site is built by cysteine 95, cysteine 100, cysteine 103, and cysteine 115. Residues 178 to 208 (DRDKLDGLYECILCACCSTSCPSYWWNADKY) enclose the 4Fe-4S ferredoxin-type domain. Cysteine 188, cysteine 191, and cysteine 194 together coordinate [4Fe-4S] cluster. Cysteine 198 is a binding site for [3Fe-4S] cluster. Tryptophan 203 contacts a ubiquinone. Positions 245 and 251 each coordinate [3Fe-4S] cluster. Cysteine 255 is a [4Fe-4S] cluster binding site.

The protein belongs to the succinate dehydrogenase/fumarate reductase iron-sulfur protein family. In terms of assembly, component of complex II composed of four subunits: the flavoprotein (FP) sdha, iron-sulfur protein (IP) sdhb, and a cytochrome b composed of sdhc and sdhd. It depends on [2Fe-2S] cluster as a cofactor. Requires [3Fe-4S] cluster as cofactor. [4Fe-4S] cluster is required as a cofactor.

It localises to the mitochondrion inner membrane. It carries out the reaction a quinone + succinate = fumarate + a quinol. The catalysed reaction is (R)-malate + a quinone = enol-oxaloacetate + a quinol. It catalyses the reaction (S)-malate + a quinone = enol-oxaloacetate + a quinol. Its pathway is carbohydrate metabolism; tricarboxylic acid cycle; fumarate from succinate (eukaryal route): step 1/1. Enol-oxaloacetate inhibits the succinate dehydrogenase activity. Its function is as follows. Iron-sulfur protein (IP) subunit of the succinate dehydrogenase complex (mitochondrial respiratory chain complex II), responsible for transferring electrons from succinate to ubiquinone (coenzyme Q). SDH also oxidizes malate to the non-canonical enol form of oxaloacetate, enol-oxaloacetate. Enol-oxaloacetate, which is a potent inhibitor of the succinate dehydrogenase activity, is further isomerized into keto-oxaloacetate. This chain is Succinate dehydrogenase [ubiquinone] iron-sulfur subunit, mitochondrial (sdhb), found in Xenopus laevis (African clawed frog).